Consider the following 216-residue polypeptide: MEVIHLGAEHSLLNRFVMEMRDVTIQNDRLRFRRNIERVGEVMAYEISKKMTQQVRTVTTPLGEAECSVPQDKVVLATILRAGLPFHHGFLNYFDYCENAFVSAYRKYKDRLNFDIHIEYIASPDITDKVLIISDPMLATGSSMELAYKALLTKGNPKHIHIASIIASQQAVDYIRGVMPDNTTIWIAAIDPTIDEHSYIVPGLGDAGDLAYGEKL.

5-phospho-alpha-D-ribose 1-diphosphate is bound by residues arginine 81, arginine 106, and 135 to 143 (DPMLATGSS). Residues isoleucine 200 and 205 to 207 (GDA) contribute to the uracil site. Aspartate 206 provides a ligand contact to 5-phospho-alpha-D-ribose 1-diphosphate.

The protein belongs to the UPRTase family. Mg(2+) is required as a cofactor.

It carries out the reaction UMP + diphosphate = 5-phospho-alpha-D-ribose 1-diphosphate + uracil. It functions in the pathway pyrimidine metabolism; UMP biosynthesis via salvage pathway; UMP from uracil: step 1/1. Allosterically activated by GTP. Catalyzes the conversion of uracil and 5-phospho-alpha-D-ribose 1-diphosphate (PRPP) to UMP and diphosphate. This Porphyromonas gingivalis (strain ATCC 33277 / DSM 20709 / CIP 103683 / JCM 12257 / NCTC 11834 / 2561) protein is Uracil phosphoribosyltransferase (upp).